The primary structure comprises 475 residues: 3-isopropylmalate dehydratase large subunit (475 aa).

Residues C349, C409, and C412 each contribute to the [4Fe-4S] cluster site.

The protein belongs to the aconitase/IPM isomerase family. LeuC type 1 subfamily. As to quaternary structure, heterodimer of LeuC and LeuD. The cofactor is [4Fe-4S] cluster.

The enzyme catalyses (2R,3S)-3-isopropylmalate = (2S)-2-isopropylmalate. It functions in the pathway amino-acid biosynthesis; L-leucine biosynthesis; L-leucine from 3-methyl-2-oxobutanoate: step 2/4. In terms of biological role, catalyzes the isomerization between 2-isopropylmalate and 3-isopropylmalate, via the formation of 2-isopropylmaleate. In Cereibacter sphaeroides (strain KD131 / KCTC 12085) (Rhodobacter sphaeroides), this protein is 3-isopropylmalate dehydratase large subunit.